The following is a 201-amino-acid chain: MQTSPLLTQLMEALRCLSGVGPKSAQRMAFTLLQRDRSGGMRLAQALTRAMSEIGHCADCRTFTEQEVCNICSNPRRQENGQICVVESPADIYAIEQTGQFSGRYFVLMGHLSPLDGIGPDDIGLDRLEQRLAEEKITEVILATNPTVEGEATANYIAELCAQYDVEASRIAHGVPVGGELEMVDGTTLSHSLAGRHKIRF.

The C4-type zinc finger occupies 57–72; the sequence is CADCRTFTEQEVCNIC. The 96-residue stretch at 81–176 folds into the Toprim domain; sequence GQICVVESPA…EASRIAHGVP (96 aa).

Belongs to the RecR family.

Its function is as follows. May play a role in DNA repair. It seems to be involved in an RecBC-independent recombinational process of DNA repair. It may act with RecF and RecO. The protein is Recombination protein RecR of Shigella boydii serotype 4 (strain Sb227).